A 489-amino-acid chain; its full sequence is MPLASLSLDPAPFPLIRPAAGWSGRVLPVPGPAPRLCRPLRAAPVAPATTDEPSAAARGRLESLSQVAGVLGTQWGDEGKGKLVDILAQRFDVVARCQGGANAGHTIYNSEGKKFALHLVPSGILNENTQCVIGNGVVVHLPGFFKEIDGLESNGISCKGRLLVSDRAHLLFDLHQVVDGLREVELGNSLIGTTKRGIGPCYSNKVTRNGLRISDLRHMDTFGAKLNNLLRDAALRFKDFEYNSKILKEEVEKYKRFAERLEPFITDTVHFMNQSILQKKKILVEGGQATMLDIDFGTYPFVTSSSPSAGGICTGLGIAPRSLGDIIGVVKAYTTRVGSGPFPTELLGKTGDLLRASGMEFGTTTGRPRRCGWLDIVALKYCCQINGFSSLNLTKLDVLTGLKEIKLGTSYYTDDGNTVQSFPADLDLLEQIKVKYEALPGWEEDISSIRDYSDLPETARRYVERIEELVGIPVHYIGVGPGRDALIYK.

A chloroplast-targeting transit peptide spans 1 to 54 (MPLASLSLDPAPFPLIRPAAGWSGRVLPVPGPAPRLCRPLRAAPVAPATTDEPS). Residues 76 to 82 (GDEGKGK) and 104 to 106 (GHT) contribute to the GTP site. Asp77 serves as the catalytic Proton acceptor. 2 residues coordinate Mg(2+): Asp77 and Gly104. IMP is bound by residues 77 to 80 (DEGK), 102 to 105 (NAGH), Thr194, Arg208, Gln288, Thr303, and Arg367. The Proton donor role is filled by His105. 363 to 369 (TTTGRPR) serves as a coordination point for substrate. GTP contacts are provided by residues Arg369, 395 to 397 (KLD), and 478 to 480 (GVG).

It belongs to the adenylosuccinate synthetase family. In terms of assembly, homodimer. It depends on Mg(2+) as a cofactor.

Its subcellular location is the plastid. The protein resides in the chloroplast. The catalysed reaction is IMP + L-aspartate + GTP = N(6)-(1,2-dicarboxyethyl)-AMP + GDP + phosphate + 2 H(+). The protein operates within purine metabolism; AMP biosynthesis via de novo pathway; AMP from IMP: step 1/2. Functionally, plays an important role in the de novo pathway and in the salvage pathway of purine nucleotide biosynthesis. Catalyzes the first committed step in the biosynthesis of AMP from IMP. This is Adenylosuccinate synthetase 2, chloroplastic from Sorghum bicolor (Sorghum).